A 240-amino-acid polypeptide reads, in one-letter code: MORN repeat-containing protein 3 (240 aa).

The tract at residues 6-35 (CPKKSESLWKGWDRKAQRNGLRSQVYAVNG) is interaction with MDM2. MORN repeat units follow at residues 38–60 (YVGE…KKGA), 62–84 (YEGD…DQQT), 91–113 (YSGW…PKEY), 114–136 (YEGD…NGDI), 137–159 (YEGQ…NGNR), 160–182 (YEGC…DHGQ), and 184–205 (FEGF…GRDE). The tract at residues 76–100 (TLSLPDQQTGKCRRVYSGWWKGDKK) is interaction with SIRT1. The segment at 206 to 240 (APEPTQFPIPEVKILDPDGVLAEALAMFRKTEEGD) is interaction with TP53.

Interacts with MEIG1. Interacts with TP53, MDM2 and SIRT1; the interactions mediate post-transcriptional modifications of TP53 by MDM2 and SIRT1.

Its subcellular location is the cytoplasmic vesicle. The protein localises to the secretory vesicle. It is found in the acrosome. Functionally, assembles a suppression complex (suppresome) by tethering SIRT1 and MDM2 to regulate composite modifications of p53/TP53. Confers both deacetylation-mediated functional inactivation, by SIRT1, and ubiquitination-dependent degradation, by MDM2, of p53/TP53, promoting a proliferative and cell survival behaviors. May play a role in the regulation of spermatogenesis. The sequence is that of MORN repeat-containing protein 3 from Homo sapiens (Human).